The chain runs to 137 residues: Envelope glycoprotein L (137 aa).

The N-terminal stretch at 1–25 (MRTVGVFLATCLVTIFVLPTWGNWA) is a signal peptide. The tract at residues 23-128 (NWAYPCCHVT…SVEDLFGANL (106 aa)) is interaction with gH. Disulfide bonds link C28–C56 and C29–C79.

It belongs to the herpesviridae glycoprotein L family. In terms of assembly, interacts with glycoprotein H (gH); this interaction is necessary for the correct processing and cell surface expression of gH. The heterodimer gH/gL seems to interact with gB trimers during fusion. The heterodimer gH/gL interacts with host EPHA2 to facilitate virus internalization and fusion.

Its subcellular location is the virion membrane. The protein resides in the host cell membrane. It is found in the host Golgi apparatus. The protein localises to the host trans-Golgi network. Functionally, the heterodimer glycoprotein H-glycoprotein L is required for the fusion of viral and plasma membranes leading to virus entry into the host cell. Acts as a functional inhibitor of gH and maintains gH in an inhibited form. Upon binding to host integrins, gL dissociates from gH leading to activation of the viral fusion glycoproteins gB and gH. The heterodimer gH/gL targets also host EPHA2 to promote viral entry. This chain is Envelope glycoprotein L, found in Epstein-Barr virus (strain AG876) (HHV-4).